Here is an 89-residue protein sequence, read N- to C-terminus: Small ribosomal subunit protein bS20 (89 aa).

It belongs to the bacterial ribosomal protein bS20 family.

Functionally, binds directly to 16S ribosomal RNA. In Syntrophus aciditrophicus (strain SB), this protein is Small ribosomal subunit protein bS20.